Consider the following 705-residue polypeptide: Double-strand break repair protein MRE11 (705 aa).

Mn(2+) is bound by residues Asp-15, His-17, Asp-55, and Asn-122. His-123 serves as the catalytic Proton donor. 3 residues coordinate Mn(2+): His-220, His-248, and His-250. The segment covering 505 to 514 (RSLRSKEDSR) has biased composition (basic and acidic residues). Positions 505–705 (RSLRSKEDSR…TRNYGAVRRR (201 aa)) are disordered. Composition is skewed to polar residues over residues 515–538 (FTSSSQNLDTGGRSVTAQSNLNSF) and 589–605 (SMKQTTLNFSQSRSSAA). The segment covering 641–663 (GRKRAAPRGGRGRGRGATAKRGR) has biased composition (basic residues).

It belongs to the MRE11/RAD32 family. In terms of assembly, component of the MRN complex composed of two heterodimers RAD50/MRE11 associated with a single NBS1. Mn(2+) serves as cofactor.

It is found in the nucleus. The protein resides in the chromosome. Core component of the MRN complex, which plays a central role in double-strand break (DSB) repair, DNA recombination, maintenance of telomere integrity and meiosis. The MRN complex is involved in the repair of DNA double-strand breaks (DSBs) via homologous recombination (HR), an error-free mechanism which primarily occurs during S and G2 phases. The complex (1) mediates the end resection of damaged DNA, which generates proper single-stranded DNA, a key initial steps in HR, and is (2) required for the recruitment of other repair factors and efficient activation of ATM and ATR upon DNA damage. Within the MRN complex, MRE11 possesses both single-strand endonuclease activity and double-strand-specific 3'-5' exonuclease activity. MRE11 first endonucleolytically cleaves the 5' strand at DNA DSB ends to prevent non-homologous end joining (NHEJ) and licence HR. It then generates a single-stranded DNA gap via 3' to 5' exonucleolytic degradation, which is required for single-strand invasion and recombination. This Oryza sativa subsp. indica (Rice) protein is Double-strand break repair protein MRE11.